A 293-amino-acid polypeptide reads, in one-letter code: Formamidopyrimidine-DNA glycosylase (293 aa).

Pro-2 serves as the catalytic Schiff-base intermediate with DNA. Glu-3 serves as the catalytic Proton donor. The active-site Proton donor; for beta-elimination activity is the Lys-58. The DNA site is built by His-104, Arg-123, and Arg-166. Residues 257-293 (KVYDREGEPCPTLRCKGHVQRIVQAGRSTFFCATCQR) form an FPG-type zinc finger. Arg-283 acts as the Proton donor; for delta-elimination activity in catalysis.

It belongs to the FPG family. In terms of assembly, monomer. Requires Zn(2+) as cofactor.

The catalysed reaction is Hydrolysis of DNA containing ring-opened 7-methylguanine residues, releasing 2,6-diamino-4-hydroxy-5-(N-methyl)formamidopyrimidine.. It catalyses the reaction 2'-deoxyribonucleotide-(2'-deoxyribose 5'-phosphate)-2'-deoxyribonucleotide-DNA = a 3'-end 2'-deoxyribonucleotide-(2,3-dehydro-2,3-deoxyribose 5'-phosphate)-DNA + a 5'-end 5'-phospho-2'-deoxyribonucleoside-DNA + H(+). In terms of biological role, involved in base excision repair of DNA damaged by oxidation or by mutagenic agents. Acts as a DNA glycosylase that recognizes and removes damaged bases. Has a preference for oxidized purines, such as 7,8-dihydro-8-oxoguanine (8-oxoG). Has AP (apurinic/apyrimidinic) lyase activity and introduces nicks in the DNA strand. Cleaves the DNA backbone by beta-delta elimination to generate a single-strand break at the site of the removed base with both 3'- and 5'-phosphates. This Azorhizobium caulinodans (strain ATCC 43989 / DSM 5975 / JCM 20966 / LMG 6465 / NBRC 14845 / NCIMB 13405 / ORS 571) protein is Formamidopyrimidine-DNA glycosylase.